The following is a 634-amino-acid chain: Chaperone protein DnaK (634 aa).

Phosphothreonine; by autocatalysis is present on Thr-197. The interval 592 to 634 (IGSSVYQQPGNQPPAPGGPNANASDDKGPDDDVIDADFTETKD) is disordered. A compositionally biased stretch (acidic residues) spans 619 to 634 (GPDDDVIDADFTETKD).

Belongs to the heat shock protein 70 family.

Functionally, acts as a chaperone. This is Chaperone protein DnaK from Prochlorococcus marinus (strain MIT 9515).